We begin with the raw amino-acid sequence, 242 residues long: Terpene cyclase cle7 (242 aa).

The next 7 helical transmembrane spans lie at leucine 20–isoleucine 40, glycine 50–leucine 69, valine 79–serine 101, leucine 117–leucine 137, phenylalanine 143–valine 163, serine 172–leucine 192, and isoleucine 207–phenylalanine 227.

This sequence belongs to the paxB family.

It localises to the membrane. The protein operates within secondary metabolite biosynthesis; terpenoid biosynthesis. In terms of biological role, non-reducing polyketide synthase; part of the cluster A that mediates the biosynthesis of chevalone E and its oxidized derivatives that possess a unique five-membered lactone ring and can synergistically enhance the cytotoxicity of doxorubicin (DOX) in breast cancer cells. Within the pathway, cle7 takes part to the biosynthesis of the molecular scaffold by catalyzing the cyclization of the prenyl group initiated by protonation and ring-opening of the epoxide to produce the chevalone E intermediate. The molecular scaffold is commonly biosynthesized by a series of enzymes including the non-reducing polyketide synthase (NR-PKS) cle1 that produces the alpha-pyrone triacetic acid lactone (TAL); The membrane-bound prenyltransferase cle5 that accepts TAL as its substrate to perform a C-3 geranylgeranylation reaction, in which the pathway-dedicated GGPS cle6 is required to provide GGPP, the other substrate of cle5; the FAD-dependent monooxygenase Cle3 that forms an (S)-epoxide ring at the terminal olefin of the geranylgeranyl group; and the terpene cyclase Cle7 that catalyzes the cyclization of the prenyl group that yields the pentacyclic pathway intermediate chevalone E. Chevalone E can derivatize into seven new oxidized analogs by the cytochrome P450 monooxygenases cle2 (acting at C-20) and cle4 (acting at C-11 and C-12). The protein is Terpene cyclase cle7 of Aspergillus versicolor.